We begin with the raw amino-acid sequence, 343 residues long: Hydroxymethylglutaryl-CoA synthase (343 aa).

(3S)-3-hydroxy-3-methylglutaryl-CoA is bound by residues aspartate 28 and alanine 29. Glutamate 80 (proton donor/acceptor) is an active-site residue. Cysteine 112 lines the (3S)-3-hydroxy-3-methylglutaryl-CoA pocket. The active-site Acyl-thioester intermediate is cysteine 112. Arginine 198 lines the CoA pocket. The (3S)-3-hydroxy-3-methylglutaryl-CoA site is built by threonine 200 and histidine 233. Histidine 233 serves as the catalytic Proton donor/acceptor. Residue lysine 238 coordinates CoA. Residues arginine 242, asparagine 265, and serine 295 each coordinate (3S)-3-hydroxy-3-methylglutaryl-CoA.

It belongs to the thiolase-like superfamily. Archaeal HMG-CoA synthase family. As to quaternary structure, interacts with acetoacetyl-CoA thiolase that catalyzes the precedent step in the pathway and with a DUF35 protein. The acetoacetyl-CoA thiolase/HMG-CoA synthase complex channels the intermediate via a fused CoA-binding site, which allows for efficient coupling of the endergonic thiolase reaction with the exergonic HMGCS reaction.

The catalysed reaction is acetoacetyl-CoA + acetyl-CoA + H2O = (3S)-3-hydroxy-3-methylglutaryl-CoA + CoA + H(+). It participates in metabolic intermediate biosynthesis; (R)-mevalonate biosynthesis; (R)-mevalonate from acetyl-CoA: step 2/3. Its function is as follows. Catalyzes the condensation of acetyl-CoA with acetoacetyl-CoA to form 3-hydroxy-3-methylglutaryl-CoA (HMG-CoA). Functions in the mevalonate (MVA) pathway leading to isopentenyl diphosphate (IPP), a key precursor for the biosynthesis of isoprenoid compounds that are building blocks of archaeal membrane lipids. The sequence is that of Hydroxymethylglutaryl-CoA synthase from Archaeoglobus fulgidus (strain ATCC 49558 / DSM 4304 / JCM 9628 / NBRC 100126 / VC-16).